A 753-amino-acid polypeptide reads, in one-letter code: MRPVSVWQWSPWGLLLCLLCSSCLGSPSPSTGPEKKAGSQGLRFRLAGFPRKPYEGRVEIQRAGEWGTICDDDFTLQAAHILCRELGFTEATGWTHSAKYGPGTGRIWLDNLSCSGTEQSVTECASRGWGNSDCTHDEDAGVICKDQRLPGFSDSNVIEVEHHLQVEEVRIRPAVGWGRRPLPVTEGLVEVRLPDGWSQVCDKGWSAHNSHVVCGMLGFPSEKRVNAAFYRLLAQRQQHSFGLHGVACVGTEAHLSLCSLEFYRANDTARCPGGGPAVVSCVPGPVYAASSGQKKQQQSKPQGEARVRLKGGAHPGEGRVEVLKASTWGTVCDRKWDLHAASVVCRELGFGSAREALSGARMGQGMGAIHLSEVRCSGQELSLWKCPHKNITAEDCSHSQDAGVRCNLPYTGAETRIRLSGGRSQHEGRVEVQIGGPGPLRWGLICGDDWGTLEAMVACRQLGLGYANHGLQETWYWDSGNITEVVMSGVRCTGTELSLDQCAHHGTHITCKRTGTRFTAGVICSETASDLLLHSALVQETAYIEDRPLHMLYCAAEENCLASSARSANWPYGHRRLLRFSSQIHNLGRADFRPKAGRHSWVWHECHGHYHSMDIFTHYDILTPNGTKVAEGHKASFCLEDTECQEDVSKRYECANFGEQGITVGCWDLYRHDIDCQWIDITDVKPGNYILQVVINPNFEVAESDFTNNAMKCNCKYDGHRIWVHNCHIGDAFSEEANRRFERYPGQTSNQII.

Positions 1–25 (MRPVSVWQWSPWGLLLCLLCSSCLG) are cleaved as a signal peptide. 2 SRCR domains span residues 44–145 (FRLA…VICK) and 169–282 (VRIR…VSCV). 6 disulfides stabilise this stretch: C70–C134, C83–C144, C114–C124, C201–C271, C214–C281, and C248–C258. N-linked (GlcNAc...) asparagine glycosylation occurs at N111. N266 carries N-linked (GlcNAc...) asparagine glycosylation. Low complexity predominate over residues 290–302 (SSGQKKQQQSKPQ). A disordered region spans residues 290 to 315 (SSGQKKQQQSKPQGEARVRLKGGAHP). 2 SRCR domains span residues 307–407 (VRLK…VRCN) and 417–525 (IRLS…VICS). Disulfide bonds link C332–C396, C345–C406, C376–C386, C446–C511, C459–C524, C492–C502, C554–C560, C606–C654, C638–C644, C666–C676, and C713–C727. N-linked (GlcNAc...) asparagine glycosylation is found at N390 and N481. Positions 529–732 (SDLLLHSALV…WVHNCHIGDA (204 aa)) are lysyl-oxidase like. Residues H607, H609, and H611 each contribute to the Cu cation site. N-linked (GlcNAc...) asparagine glycosylation occurs at N625. Residues 634 to 670 (KASFCLEDTECQEDVSKRYECANFGEQGITVGCWDLY) constitute a cross-link (lysine tyrosylquinone (Lys-Tyr)). The residue at position 670 (Y670) is a 2',4',5'-topaquinone.

Belongs to the lysyl oxidase family. In terms of assembly, interacts with STAT3. Requires Cu cation as cofactor. The cofactor is lysine tyrosylquinone residue. Post-translationally, the lysine tyrosylquinone cross-link (LTQ) is generated by condensation of the epsilon-amino group of a lysine with a topaquinone produced by oxidation of tyrosine. In terms of tissue distribution, isoform 1: Predominantly detected in the heart, placenta, lung, and small intestine. Isoform 2: Highly detected in the kidney, pancreas, spleen, and thymus, and is absent in lung. In eye, present in all layers of corneas as well as in the limbus and conjunctiva (at protein level).

It is found in the secreted. The protein resides in the extracellular space. The protein localises to the cytoplasm. Its subcellular location is the nucleus. The enzyme catalyses L-lysyl-[protein] + O2 + H2O = (S)-2-amino-6-oxohexanoyl-[protein] + H2O2 + NH4(+). It carries out the reaction N(6)-acetyl-L-lysyl-[protein] + O2 + H2O = acetamide + (S)-2-amino-6-oxohexanoyl-[protein] + H2O2. Protein-lysine 6-oxidase that mediates the oxidation of peptidyl lysine residues to allysine in target proteins. Catalyzes the post-translational oxidative deamination of peptidyl lysine residues in precursors of elastin and different types of collagens, a prerequisite in the formation of cross-links between collagens and elastin. Required for somite boundary formation by catalyzing oxidation of fibronectin (FN1), enhancing integrin signaling in myofibers and their adhesion to the myotendinous junction (MTJ). Acts as a regulator of inflammatory response by inhibiting differentiation of naive CD4(+) T-cells into T-helper Th17 or regulatory T-cells (Treg): acts by interacting with STAT3 in the nucleus and catalyzing both deacetylation and oxidation of lysine residues on STAT3, leading to disrupt STAT3 dimerization and inhibit STAT3 transcription activity. Oxidation of lysine residues to allysine on STAT3 preferentially takes place on lysine residues that are acetylated. Also able to catalyze deacetylation of lysine residues on STAT3. In terms of biological role, shows protein-lysine 6-oxidase activity toward elastin and different types of collagens, with the highest activity toward collagen type VIII. Functionally, shows protein-lysine 6-oxidase activity toward elastin and different types of collagens, with the highest activity toward collagen type IV. The sequence is that of Lysyl oxidase homolog 3 from Homo sapiens (Human).